Reading from the N-terminus, the 383-residue chain is Protein KES1 (383 aa).

Residues 317-339 (FETASKDKARIENAQRQKRKDEA) are compositionally biased toward basic and acidic residues. The interval 317–346 (FETASKDKARIENAQRQKRKDEAAAGTPHQ) is disordered.

The protein belongs to the OSBP family.

Lipid transporter involved in lipid countertransport between the Golgi complex and membranes of the endoplasmic reticulum: specifically exchanges sterol with phosphatidylinositol 4-phosphate (PI4P), delivering sterol to the Golgi in exchange for PI4P, which is degraded by the SAC1 phosphatase in the endoplasmic reticulum. The chain is Protein KES1 (KES1) from Mycosarcoma maydis (Corn smut fungus).